We begin with the raw amino-acid sequence, 442 residues long: Syndecan-3 (442 aa).

Disordered regions lie at residues 1 to 25 (MKPG…APGA) and 47 to 80 (RWRN…YSGS). Positions 1-44 (MKPGPPRRGTAQGQRVDTATHAPGARGLLLPPLLLLLLAGRAAG) are cleaved as a signal peptide. Over 45–387 (AQRWRNENFE…SILERKEVLV (343 aa)) the chain is Extracellular. Over residues 48–58 (WRNENFERPVD) the composition is skewed to basic and acidic residues. A compositionally biased stretch (acidic residues) spans 61 to 75 (GSGDDDSFPDDELDD). Ser-78, Ser-80, Ser-82, and Ser-89 each carry an O-linked (Xyl...) (glycosaminoglycan) serine glycan. Residue Thr-107 is glycosylated (O-linked (GalNAc) threonine; by GALNT13). Disordered stretches follow at residues 152–199 (ESSQ…PATA), 253–293 (ATSR…AQTP), and 305–327 (EPEV…TTQP). 2 stretches are compositionally biased toward low complexity: residues 157–199 (ATTI…PATA) and 276–287 (TLPLGTTAPGPT). Ser-161 is a glycosylation site (O-linked (GalNAc) serine; by GALNT13). Residues Thr-162, Thr-163, Thr-170, and Thr-172 are each glycosylated (O-linked (GalNAc) threonine; by GALNT13). Residues Ser-315 and Ser-367 are each glycosylated (O-linked (Xyl...) (glycosaminoglycan) serine). Residues 388-408 (AVIVGGVVGALFAAFLVTLLI) form a helical membrane-spanning segment. Phosphotyrosine occurs at positions 409, 419, 431, and 441. Over 409–442 (YRMKKKDEGSYTLEEPKQASVTYQKPDKQEEFYA) the chain is Cytoplasmic. The segment at 419 to 442 (YTLEEPKQASVTYQKPDKQEEFYA) is disordered. Positions 433–442 (KPDKQEEFYA) are enriched in basic and acidic residues.

It belongs to the syndecan proteoglycan family. As to quaternary structure, interacts with TIAM1. Interacts with PTN (via heparan sulfate chains); this interaction mediates the neurite outgrowth-promoting signal from PTN to the cytoskeleton of growing neurites; this interaction mediates osteoblast recruitment. Interacts with MDK; this interaction induces SDC3 clustering; this interaction induces neuronal cell adhesion and neurite outgrowth. In terms of processing, O-glycosylated within the Thr/Ser-rich region which could interact with lectin domains on other molecules.

It is found in the cell membrane. Functionally, cell surface proteoglycan that may bear heparan sulfate. May have a role in the organization of cell shape by affecting the actin cytoskeleton, possibly by transferring signals from the cell surface in a sugar-dependent mechanism. This chain is Syndecan-3 (Sdc3), found in Mus musculus (Mouse).